Consider the following 382-residue polypeptide: uncharacterized protein (382 aa).

12 helical membrane-spanning segments follow: residues valine 8–leucine 28, methionine 45–isoleucine 65, tyrosine 75–tryptophan 95, phenylalanine 102–serine 122, leucine 131–serine 151, leucine 157–phenylalanine 177, leucine 204–proline 224, glycine 231–glycine 251, valine 270–proline 290, alanine 291–cysteine 311, alanine 325–methionine 345, and serine 349–leucine 369.

Belongs to the major facilitator superfamily. YcaD (TC 2.A.1.26) family.

It is found in the cell inner membrane. This is an uncharacterized protein from Salmonella agona (strain SL483).